We begin with the raw amino-acid sequence, 547 residues long: Pyochelin synthase PchD (547 aa).

It belongs to the ATP-dependent AMP-binding enzyme family.

It carries out the reaction salicylate + holo-[ACP] + ATP = salicyl-[ACP] + AMP + diphosphate. The protein operates within siderophore biosynthesis. It participates in antifungal biosynthesis. Functionally, involved in the biosynthesis of the siderophore pyochelin. Specifically adenylates salicylate and loads it onto the holo form of PchE via a thioester linkage to the phosphopanthetheine moiety. Is also involved in the synthesis of the antifungal antibiotic dihydroaeruginoic acid (Dha or hydroxyphenyl-thiazolinyl-carboxylate), a precursor of pyochelin. The protein is Pyochelin synthase PchD of Pseudomonas aeruginosa (strain UCBPP-PA14).